The primary structure comprises 216 residues: Uracil phosphoribosyltransferase (216 aa).

5-phospho-alpha-D-ribose 1-diphosphate is bound by residues Arg85, Arg110, and 135-143 (DPMVATGYS). Residues Ile200 and 205–207 (GDA) contribute to the uracil site. Residue Asp206 coordinates 5-phospho-alpha-D-ribose 1-diphosphate.

Belongs to the UPRTase family. The cofactor is Mg(2+).

It carries out the reaction UMP + diphosphate = 5-phospho-alpha-D-ribose 1-diphosphate + uracil. It functions in the pathway pyrimidine metabolism; UMP biosynthesis via salvage pathway; UMP from uracil: step 1/1. Allosterically activated by GTP. In terms of biological role, catalyzes the conversion of uracil and 5-phospho-alpha-D-ribose 1-diphosphate (PRPP) to UMP and diphosphate. In Paraburkholderia phymatum (strain DSM 17167 / CIP 108236 / LMG 21445 / STM815) (Burkholderia phymatum), this protein is Uracil phosphoribosyltransferase.